A 199-amino-acid polypeptide reads, in one-letter code: Protein-methionine-sulfoxide reductase heme-binding subunit MsrQ (199 aa).

5 consecutive transmembrane segments (helical) span residues 13-33 (VLLH…VDQG), 79-99 (LLGL…ALLE), 120-140 (LGII…QIMM), 147-167 (WQKL…HYLW), and 169-189 (VKTL…LLLL).

Belongs to the MsrQ family. In terms of assembly, heterodimer of a catalytic subunit (MsrP) and a heme-binding subunit (MsrQ). FMN serves as cofactor. Heme b is required as a cofactor.

Its subcellular location is the cell inner membrane. In terms of biological role, part of the MsrPQ system that repairs oxidized periplasmic proteins containing methionine sulfoxide residues (Met-O), using respiratory chain electrons. Thus protects these proteins from oxidative-stress damage caused by reactive species of oxygen and chlorine generated by the host defense mechanisms. MsrPQ is essential for the maintenance of envelope integrity under bleach stress, rescuing a wide series of structurally unrelated periplasmic proteins from methionine oxidation. MsrQ provides electrons for reduction to the reductase catalytic subunit MsrP, using the quinone pool of the respiratory chain. This chain is Protein-methionine-sulfoxide reductase heme-binding subunit MsrQ, found in Pectobacterium atrosepticum (strain SCRI 1043 / ATCC BAA-672) (Erwinia carotovora subsp. atroseptica).